The chain runs to 58 residues: Small ribosomal subunit protein bS21 (58 aa).

Belongs to the bacterial ribosomal protein bS21 family.

This chain is Small ribosomal subunit protein bS21, found in Lactobacillus acidophilus (strain ATCC 700396 / NCK56 / N2 / NCFM).